Consider the following 452-residue polypeptide: Exodeoxyribonuclease 7 large subunit (452 aa).

It belongs to the XseA family. As to quaternary structure, heterooligomer composed of large and small subunits.

It is found in the cytoplasm. The catalysed reaction is Exonucleolytic cleavage in either 5'- to 3'- or 3'- to 5'-direction to yield nucleoside 5'-phosphates.. Bidirectionally degrades single-stranded DNA into large acid-insoluble oligonucleotides, which are then degraded further into small acid-soluble oligonucleotides. The protein is Exodeoxyribonuclease 7 large subunit of Bacillus cereus (strain ATCC 10987 / NRS 248).